A 151-amino-acid chain; its full sequence is Salivary C-type lectin 2 (151 aa).

An N-terminal signal peptide occupies residues 1-15 (MKLLLSFALLGLVAC). Positions 25–147 (YCFPNEVATW…CTSKRRFVCE (123 aa)) constitute a C-type lectin domain. Intrachain disulfides connect cysteine 41/cysteine 146 and cysteine 118/cysteine 138.

It depends on Ca(2+) as a cofactor. In terms of tissue distribution, expressed in female salivary gland. Not detected or low-level expression in female midgut and fat body.

It is found in the secreted. Salivary protein with carbohydrate-binding activity. Binds to D-mannose, D-galactose, D-glucose and maltose. Agglutinates host erythrocytes. Probably participates in mosquito innate immune responses to prevent microorganism multiplication in sugar and blood meals. Functionally, (Microbial infection) Binds to the surface of and agglutinates Escherichia coli in vitro. Its function is as follows. (Microbial infection) Binds to the surface of and agglutinates Pseudomonas aeruginosa in vitro. In terms of biological role, (Microbial infection) Binds to the surface of and agglutinates Bacillus subtilis in vitro. (Microbial infection) Agglutinates Staphylococcus aureus in vitro. Functionally, (Microbial infection) Agglutinates Candida albicans in vitro. Its function is as follows. (Microbial infection) Does not affect replication of dengue virus type 2 in host cells. The chain is Salivary C-type lectin 2 from Aedes albopictus (Asian tiger mosquito).